A 1401-amino-acid polypeptide reads, in one-letter code: DNA-directed RNA polymerase subunit beta' (1401 aa).

Zn(2+)-binding residues include Cys71, Cys73, Cys86, and Cys89. Positions 462, 464, and 466 each coordinate Mg(2+). Zn(2+) contacts are provided by Cys810, Cys884, Cys891, and Cys894. The disordered stretch occupies residues 1377–1401 (RRKGTGAESATPMLADMANDPAAAE).

It belongs to the RNA polymerase beta' chain family. In terms of assembly, the RNAP catalytic core consists of 2 alpha, 1 beta, 1 beta' and 1 omega subunit. When a sigma factor is associated with the core the holoenzyme is formed, which can initiate transcription. The cofactor is Mg(2+). Zn(2+) serves as cofactor.

The catalysed reaction is RNA(n) + a ribonucleoside 5'-triphosphate = RNA(n+1) + diphosphate. Its function is as follows. DNA-dependent RNA polymerase catalyzes the transcription of DNA into RNA using the four ribonucleoside triphosphates as substrates. The protein is DNA-directed RNA polymerase subunit beta' of Rhizobium meliloti (strain 1021) (Ensifer meliloti).